Consider the following 272-residue polypeptide: Shikimate dehydrogenase (NADP(+)) (272 aa).

Shikimate-binding positions include 14 to 16 (SKS) and Thr61. The active-site Proton acceptor is the Lys65. NADP(+) is bound at residue Glu77. The shikimate site is built by Asn86 and Asp102. NADP(+)-binding positions include 126-130 (GAGGA), 149-154 (NRTVSR), and Met213. Tyr215 is a shikimate binding site. Gly237 contacts NADP(+).

This sequence belongs to the shikimate dehydrogenase family. Homodimer.

The enzyme catalyses shikimate + NADP(+) = 3-dehydroshikimate + NADPH + H(+). The protein operates within metabolic intermediate biosynthesis; chorismate biosynthesis; chorismate from D-erythrose 4-phosphate and phosphoenolpyruvate: step 4/7. Involved in the biosynthesis of the chorismate, which leads to the biosynthesis of aromatic amino acids. Catalyzes the reversible NADPH linked reduction of 3-dehydroshikimate (DHSA) to yield shikimate (SA). The sequence is that of Shikimate dehydrogenase (NADP(+)) from Shigella boydii serotype 18 (strain CDC 3083-94 / BS512).